Reading from the N-terminus, the 504-residue chain is Cystathionine beta-synthase (504 aa).

Heme is bound by residues C12 and H23. K78 bears the N6-(pyridoxal phosphate)lysine mark. Pyridoxal 5'-phosphate contacts are provided by residues N108, 215-219 (GTGGT), and S307. CBS domains follow at residues 375–434 (LSFD…IVKC) and 442–498 (MVKQ…NGTS).

The protein belongs to the cysteine synthase/cystathionine beta-synthase family. Homodimer. Requires pyridoxal 5'-phosphate as cofactor.

It catalyses the reaction L-homocysteine + L-serine = L,L-cystathionine + H2O. It participates in amino-acid biosynthesis; L-cysteine biosynthesis; L-cysteine from L-homocysteine and L-serine: step 1/2. Has no response to S-adenosyl-methionine/AdoMet, unlike mammalian orthologs. Binds non-covalently to a heme group that may control the redox sensitivity of the enzyme. In terms of biological role, hydro-lyase catalyzing the first step of the transsulfuration pathway, where the hydroxyl group of L-serine is displaced by L-homocysteine in a beta-replacement reaction to form L-cystathionine, the precursor of L-cysteine. This is Cystathionine beta-synthase from Apis mellifera (Honeybee).